The primary structure comprises 269 residues: WW domain-binding protein 1 (269 aa).

2 short sequence motifs (PPxY motif) span residues 124 to 127 and 137 to 141; these read PPAY and PPPPY. Disordered stretches follow at residues 169-203 and 249-269; these read EGTN…PPSC and PPES…GDIP. Residues 174 to 183 are compositionally biased toward polar residues; the sequence is EGVSSHQSAP.

Interacts with NEDD4. Binds to the WW domain of YAP1, WWP1 and WWP2. Interacts with WWOX. Expressed in most tissues but at significantly lower levels in placenta, lung, liver, and kidney.

The chain is WW domain-binding protein 1 (WBP1) from Homo sapiens (Human).